Consider the following 774-residue polypeptide: Acetyl-CoA decarbonylase/synthase complex subunit alpha (774 aa).

[4Fe-4S] cluster contacts are provided by cysteine 73, cysteine 76, cysteine 77, cysteine 79, cysteine 84, and cysteine 94. CO is bound at residue histidine 117. Residues histidine 251, cysteine 279, and cysteine 318 each coordinate [Ni-4Fe-4S] cluster. 4Fe-4S ferredoxin-type domains are found at residues 398 to 427 (LNEV…VKEA) and 436 to 466 (FKGF…VSMT). Residues cysteine 408, cysteine 411, cysteine 414, cysteine 418, cysteine 446, cysteine 449, cysteine 452, and cysteine 456 each contribute to the [4Fe-4S] cluster site. [Ni-4Fe-4S] cluster is bound by residues cysteine 514, cysteine 543, and cysteine 578.

The protein belongs to the Ni-containing carbon monoxide dehydrogenase family. Heterotetramer of two alpha and two epsilon subunits. The ACDS complex is made up of alpha, epsilon, beta, gamma and delta subunits with a probable stoichiometry of (alpha(2)epsilon(2))(4)-beta(8)-(gamma(1)delta(1))(8). The cofactor is [4Fe-4S] cluster. It depends on [Ni-4Fe-4S] cluster as a cofactor.

It catalyses the reaction CO + 2 oxidized [2Fe-2S]-[ferredoxin] + H2O = 2 reduced [2Fe-2S]-[ferredoxin] + CO2 + 2 H(+). Part of the ACDS complex that catalyzes the reversible cleavage of acetyl-CoA, allowing autotrophic growth from CO(2). The alpha-epsilon subcomponent functions as a carbon monoxide dehydrogenase. The polypeptide is Acetyl-CoA decarbonylase/synthase complex subunit alpha (Methanocaldococcus jannaschii (strain ATCC 43067 / DSM 2661 / JAL-1 / JCM 10045 / NBRC 100440) (Methanococcus jannaschii)).